Reading from the N-terminus, the 96-residue chain is Co-chaperonin GroES (96 aa).

It belongs to the GroES chaperonin family. In terms of assembly, heptamer of 7 subunits arranged in a ring. Interacts with the chaperonin GroEL.

The protein resides in the cytoplasm. Together with the chaperonin GroEL, plays an essential role in assisting protein folding. The GroEL-GroES system forms a nano-cage that allows encapsulation of the non-native substrate proteins and provides a physical environment optimized to promote and accelerate protein folding. GroES binds to the apical surface of the GroEL ring, thereby capping the opening of the GroEL channel. This chain is Co-chaperonin GroES, found in Actinobacillus pleuropneumoniae serotype 7 (strain AP76).